A 1171-amino-acid chain; its full sequence is Pyruvate-flavodoxin oxidoreductase (1171 aa).

2 consecutive 4Fe-4S ferredoxin-type domains span residues 682-711 and 736-767; these read EVPVWQPEGCTQCNQCAFICPHAAIRPALL and YHLAISPLDCSGCGNCVDICPARGKALKMQSL. [4Fe-4S] cluster is bound by residues Cys691, Cys694, Cys697, Cys701, Cys745, Cys748, Cys751, Cys755, Cys811, Cys814, Cys839, and Cys1072.

It belongs to the pyruvate:ferredoxin/flavodoxin oxidoreductase family. [4Fe-4S] cluster serves as cofactor.

It catalyses the reaction oxidized [flavodoxin] + pyruvate + CoA + 2 H(+) = reduced [flavodoxin] + acetyl-CoA + CO2. In terms of biological role, oxidoreductase required for the transfer of electrons from pyruvate to flavodoxin, which reduces nitrogenase. The chain is Pyruvate-flavodoxin oxidoreductase (nifJ) from Klebsiella pneumoniae.